The chain runs to 103 residues: Large ribosomal subunit protein bL21 (103 aa).

This sequence belongs to the bacterial ribosomal protein bL21 family. Part of the 50S ribosomal subunit. Contacts protein L20.

This protein binds to 23S rRNA in the presence of protein L20. The protein is Large ribosomal subunit protein bL21 of Vibrio parahaemolyticus serotype O3:K6 (strain RIMD 2210633).